Here is a 129-residue protein sequence, read N- to C-terminus: Protein Turandot B2 (129 aa).

The first 21 residues, 1 to 21 (MNSATSLMCFALLLISPLCMG), serve as a signal peptide directing secretion.

This sequence belongs to the Turandot family.

Its subcellular location is the secreted. In terms of biological role, a humoral factor that may play a role in stress tolerance. This chain is Protein Turandot B2 (TotB2), found in Drosophila erecta (Fruit fly).